A 122-amino-acid chain; its full sequence is Small ribosomal subunit protein uS13 (122 aa).

Residues 94–122 (KGLPVRGQRTHTNARTRKGPRRAIAGKKK) are disordered.

It belongs to the universal ribosomal protein uS13 family. Part of the 30S ribosomal subunit. Forms a loose heterodimer with protein S19. Forms two bridges to the 50S subunit in the 70S ribosome.

Located at the top of the head of the 30S subunit, it contacts several helices of the 16S rRNA. In the 70S ribosome it contacts the 23S rRNA (bridge B1a) and protein L5 of the 50S subunit (bridge B1b), connecting the 2 subunits; these bridges are implicated in subunit movement. Contacts the tRNAs in the A and P-sites. The protein is Small ribosomal subunit protein uS13 of Syntrophus aciditrophicus (strain SB).